A 745-amino-acid chain; its full sequence is MTVKLDFEECLKDSPRFRASVELVEAEVSELETRLEKLLKLGNGLLESGRHYLAASRAFIVGICDLAHLGPPEPMMAECLDKFTQSLSHKLDSHAELLDATQHTLQRQIQTLVKEGLRSFREAGRDFWRGAESLEAALTHNAEVPRRRAQEAEEAGAALKVARAGYRGRALDYALQINVIEDKRKFDIMEFVLRLVEAQATHFQQGHEELSQLAQYRKELGGQLHQLVLNSAREKRDMEQRHVLLKQKELGGEEPEPSLKEGPGGLVMEGHLFKRASNAFKTWSRRWFTIQSNQLVYQKRYKDPVTVVVDDLRLCTVKLCPDSERRFCFEVVSPSKSCLLQSDSERLMQLWVSAVQSSIATAFSQARLDDSPRGLGQGSGHLAISSAATLGPGGLTRGREPGGVGHVAAQVQSVDGNAQCCDCREPAPEWASINLGVTLCIQCSGIHRSLGVHFSKVRSLTLDSWEPELVKLMCELGNVVINQIYEARVEAMAVKKPGPSCSRQEKEAWIHAKYVEKKFLTKLPEIRGRRGGRGPPRGHPPVPPKPGLIRPKPGSFRSKPEPPSEDLQSLHPGALLFRAAGHPPSLPTMADALAHGADVNWVNGGQENATPLIQATAAVRVLNSLLACEFLLQNGANVNQVDNQGRGPLHHATILGHTGLACLFLKRGADLGVRDSEGRDPLTIAVETANADIVTLLRLAKMREADAAQGQAGDETYLDIFRDFSLMASDDPEKLSRRSHDLHTL.

One can recognise a BAR domain in the interval 1-226; that stretch reads MTVKLDFEEC…RKELGGQLHQ (226 aa). The interval 1-382 is required for formation of endosomal tubules when overexpressed with PIP5K1C; sequence MTVKLDFEEC…RGLGQGSGHL (382 aa). One can recognise a PH domain in the interval 265 to 360; sequence GLVMEGHLFK…WVSAVQSSIA (96 aa). An Arf-GAP domain is found at 405–527; it reads GHVAAQVQSV…KFLTKLPEIR (123 aa). Residues 405-745 form a required for interaction with GULP1 region; it reads GHVAAQVQSV…SRRSHDLHTL (341 aa). The segment at 420-443 adopts a C4-type zinc-finger fold; that stretch reads CCDCREPAPEWASINLGVTLCIQC. Tyrosine 485 carries the 3'-nitrotyrosine modification. Positions 525 to 567 are prevents interaction with ITGB1 when S-554 is not phosphorylated; the sequence is EIRGRRGGRGPPRGHPPVPPKPGLIRPKPGSFRSKPEPPSEDL. The segment at 525 to 569 is disordered; that stretch reads EIRGRRGGRGPPRGHPPVPPKPGLIRPKPGSFRSKPEPPSEDLQS. The segment covering 537-546 has biased composition (pro residues); sequence RGHPPVPPKP. Phosphoserine; by PKB is present on serine 555. 3 ANK repeats span residues 607–640, 644–673, and 677–707; these read ENATPLIQATAAVRVLNSLLACEFLLQNGANVNQ, QGRGPLHHATILGHTGLACLFLKRGADLGV, and EGRDPLTIAVETANADIVTLLRLAKMREADA.

Banana-shaped homodimer laterally assembling into tetramers, the tetramers further pack helically onto the membrane. Interacts with GTP-bound ARF6. Interacts with third cytoplasmic loop of SLC2A4/GLUT4. Interacts with CLTC. Interacts with GULP1. Forms a complex with GDP-bound ARF6 and GULP1. Interacts with ITGB1; required for ITGB1 recycling. Post-translationally, phosphorylation at Ser-555 by PKB is required for interaction with ITGB1, export of ITGB1 from recycling endosomes to the cell surface and ITGB1-dependent cell migration.

The protein resides in the recycling endosome membrane. With respect to regulation, GAP activity stimulated by phosphatidylinositol 4,5-bisphosphate (PIP2) and phosphatidic acid. In terms of biological role, GTPase-activating protein (GAP) for ADP ribosylation factor 6 (ARF6) required for clathrin-dependent export of proteins from recycling endosomes to trans-Golgi network and cell surface. Required for regulated export of ITGB1 from recycling endosomes to the cell surface and ITGB1-dependent cell migration. This chain is Arf-GAP with coiled-coil, ANK repeat and PH domain-containing protein 1 (ACAP1), found in Bos taurus (Bovine).